The primary structure comprises 548 residues: T-complex protein 1 subunit theta (548 aa).

Alanine 2 is subject to N-acetylalanine. The residue at position 23 (serine 23) is a Phosphoserine. Position 30 is a phosphotyrosine (tyrosine 30). 2 residues coordinate ADP: tyrosine 47 and glycine 48. Aspartate 99 serves as a coordination point for Mg(2+). Glycine 100, threonine 101, asparagine 102, and phenylalanine 103 together coordinate ADP. ATP is bound by residues glycine 100, threonine 101, and asparagine 102. Phosphoserine is present on serine 162. ADP is bound by residues methionine 169, serine 170, and lysine 171. Positions 170 and 171 each coordinate ATP. Position 213 is a phosphoserine (serine 213). Residues lysine 224, lysine 254, and lysine 260 each participate in a glycyl lysine isopeptide (Lys-Gly) (interchain with G-Cter in SUMO2) cross-link. A phosphoserine mark is found at serine 269 and serine 317. Lysine 318 and lysine 400 each carry N6-acetyllysine. Glycine 412 is an ADP binding site. Glycine 412 contributes to the ATP binding site. Residue lysine 459 forms a Glycyl lysine isopeptide (Lys-Gly) (interchain with G-Cter in SUMO1) linkage. Position 466 is an N6-acetyllysine (lysine 466). An ADP-binding site is contributed by aspartate 499. ATP is bound by residues aspartate 499 and lysine 504. The residue at position 505 (tyrosine 505) is a Phosphotyrosine. Residues proline 529 to aspartate 548 are disordered. Lysine 534 participates in a covalent cross-link: Glycyl lysine isopeptide (Lys-Gly) (interchain with G-Cter in SUMO2). At serine 537 the chain carries Phosphoserine. A Glycyl lysine isopeptide (Lys-Gly) (interchain with G-Cter in SUMO2) cross-link involves residue lysine 539.

Belongs to the TCP-1 chaperonin family. Component of the chaperonin-containing T-complex (TRiC), a hexadecamer composed of two identical back-to-back stacked rings enclosing a protein folding chamber. Each ring is made up of eight different subunits: TCP1/CCT1, CCT2, CCT3, CCT4, CCT5, CCT6A/CCT6, CCT7, CCT8. Interacts with PACRG. Interacts with DNAAF4. Interacts with synaptic plasticity regulator PANTS.

It localises to the cytoplasm. Its subcellular location is the cytoskeleton. The protein localises to the microtubule organizing center. The protein resides in the centrosome. It is found in the cilium basal body. It catalyses the reaction ATP + H2O = ADP + phosphate + H(+). Functionally, component of the chaperonin-containing T-complex (TRiC), a molecular chaperone complex that assists the folding of actin, tubulin and other proteins upon ATP hydrolysis. The TRiC complex mediates the folding of WRAP53/TCAB1, thereby regulating telomere maintenance. As part of the TRiC complex may play a role in the assembly of BBSome, a complex involved in ciliogenesis regulating transports vesicles to the cilia. In Macaca fascicularis (Crab-eating macaque), this protein is T-complex protein 1 subunit theta (CCT8).